The sequence spans 236 residues: SPbeta prophage-derived uncharacterized protein YomV (236 aa).

This is SPbeta prophage-derived uncharacterized protein YomV (yomV) from Bacillus subtilis (strain 168).